The following is a 339-amino-acid chain: Bifunctional phosphoglucose/phosphomannose isomerase (339 aa).

Residues 22-164 (ISVNVKAEDI…IEPVDDQIEE (143 aa)) enclose the SIS domain. Residues Gly-41, Ser-42, Ser-83, Ser-85, Thr-88, and Arg-135 each contribute to the D-fructose 6-phosphate site. The active-site Proton acceptor is the Glu-221. D-fructose 6-phosphate contacts are provided by His-237 and Lys-331. His-237 (proton donor) is an active-site residue. Lys-331 acts as the Proton acceptor in catalysis.

This sequence belongs to the PGI/PMI family. Homodimer.

It catalyses the reaction alpha-D-glucose 6-phosphate = beta-D-fructose 6-phosphate. It carries out the reaction D-mannose 6-phosphate = D-fructose 6-phosphate. Dual specificity isomerase that catalyzes the isomerization of both glucose-6-phosphate and mannose-6-phosphate to fructose-6-phosphate. The sequence is that of Bifunctional phosphoglucose/phosphomannose isomerase from Caldicellulosiruptor bescii (strain ATCC BAA-1888 / DSM 6725 / KCTC 15123 / Z-1320) (Anaerocellum thermophilum).